The chain runs to 282 residues: 4-diphosphocytidyl-2-C-methyl-D-erythritol kinase (282 aa).

K13 is an active-site residue. An ATP-binding site is contributed by 96-106 (PMGGGIGGGSS). The active site involves D138.

Belongs to the GHMP kinase family. IspE subfamily.

The enzyme catalyses 4-CDP-2-C-methyl-D-erythritol + ATP = 4-CDP-2-C-methyl-D-erythritol 2-phosphate + ADP + H(+). It functions in the pathway isoprenoid biosynthesis; isopentenyl diphosphate biosynthesis via DXP pathway; isopentenyl diphosphate from 1-deoxy-D-xylulose 5-phosphate: step 3/6. Its function is as follows. Catalyzes the phosphorylation of the position 2 hydroxy group of 4-diphosphocytidyl-2C-methyl-D-erythritol. The sequence is that of 4-diphosphocytidyl-2-C-methyl-D-erythritol kinase from Pseudomonas syringae pv. syringae (strain B728a).